The sequence spans 345 residues: Molybdate/tungstate import ATP-binding protein WtpC (345 aa).

One can recognise an ABC transporter domain in the interval 2 to 231 (LKVESISKDY…PKSEEVARFL (230 aa)). Position 33–40 (33–40 (GPSGSGKT)) interacts with ATP. A Mop domain is found at 280 to 345 (KTSARNVFKA…FKASAIHVFP (66 aa)).

It belongs to the ABC transporter superfamily. Sulfate/tungstate importer (TC 3.A.1.6) family. As to quaternary structure, the complex is composed of two ATP-binding proteins (WtpC), two transmembrane proteins (WtpB) and a solute-binding protein (WtpA).

Its subcellular location is the cell membrane. It carries out the reaction tungstate(in) + ATP + H2O = tungstate(out) + ADP + phosphate + H(+). Functionally, part of the ABC transporter complex WtpABC involved in molybdate/tungstate import. Responsible for energy coupling to the transport system. This is Molybdate/tungstate import ATP-binding protein WtpC (wtpC) from Pyrococcus horikoshii (strain ATCC 700860 / DSM 12428 / JCM 9974 / NBRC 100139 / OT-3).